We begin with the raw amino-acid sequence, 1179 residues long: MGLQFILGDATTDHAGTMATMVQANLQADSQNQIFYLVPNHIKFEAEVDLLKRLRAQAASVNGVYAQNRVQVLSFSRLAWYFLKNTALYQQPRLDRASNTMLVAKILGESKEELTIYAGEAHNTGFVTQLADQLSELVTGRITAEDLNTTVAALTPGDRHRAKLRDLGIILDHYEAEIGPYATNASLLSGLQQVMRNQDLSHTFIYLNDFNVFSASETGLVETMIETAAEVTVSLVLDKPYPAAPPVAPNLFLPAGRLYHRLYQKAKTMKVPIRLDRFAKPRPLSEGMKHLADWWQTSTNLQPQAPAQTAQNKEVELAVATDPYHELRTVARQIYQAVRQGARYRDFLILARRLDPYAAVIPAIFEEFNIPQFTDLERPMKDHPLVVLIESLFAIQDHDYQYQDVMRLLHTELLLPENMDIAAFRDALDTTDNHLVRTGITGKKRWTQTDPWRYFQRNPNADDSQLDPEADKTAQINAIKTLVADTVPQLLRQWQTAKTGREAAASLYQWLQTTGVIDQLNVWRQTANADGDLSRSQANEQAWDTFTQLLNDYATILGEADFNRDQFRELLAAGFASATYTQIPSTLDSVVISETGLVRLAKAKHVYVIGATNTAMPDVPNDSGVLNSEERQLLAAQLPDDRFLPEQGPTTTLGDPFINYLGFMAASEKLTLSYPMQNTQENSENQASPYFRQLAQALQLTPATWAPAGLGTSLKAVLGSQRAMLSDFVRAAGEAQHQKLPLSRSWQGVLASLKQTTLAPLAQKLAGSLTYQNDPGRLDPTLAVQLYGRDMNVSVSRLETYYRNQFEYFLKYGLLLQPRPEFELSPADTGSLFHAVLDQYLTQLRDAGQTLADVTAADVAAAVPPLVAAITKRPGYEILGSTHRMAYLTSRLSRLLIQVLTNMRQQQRRTGFRPMRTELQFGRIGDTRGLPGLSWPLPHGGRVNVRGKIDRLDVYRESDAQRFMVVDYKSTQHRFDDSDAYYGIALQMLTYVEAMANVPADPPFVPAGALYFHLQDPKFKFSTDLDLDIDRLKAFKYLGFLVAKDGADLAAVDKTISAETGGRSMMVPLGFKKDGAFNYNQSNILTPEDLSAYLLHNQALIIDAASRILAGDIALAPFQYGQESTVISNSDYQSIMLFDPATGFDHYNHVPKLKRKEVLGRVTTDPTQIPHHRQEDSQA.

The protein belongs to the helicase family. AddB/RexB type 2 subfamily. In terms of assembly, heterodimer of AddA and RexB. Mg(2+) serves as cofactor.

In terms of biological role, the heterodimer acts as both an ATP-dependent DNA helicase and an ATP-dependent, dual-direction single-stranded exonuclease. Recognizes the chi site generating a DNA molecule suitable for the initiation of homologous recombination. This subunit has 5' -&gt; 3' nuclease activity but not helicase activity. This is ATP-dependent helicase/deoxyribonuclease subunit B from Lacticaseibacillus paracasei (strain ATCC 334 / BCRC 17002 / CCUG 31169 / CIP 107868 / KCTC 3260 / NRRL B-441) (Lactobacillus paracasei).